The primary structure comprises 116 residues: Phosphoribosyl-AMP cyclohydrolase (116 aa).

D80 contributes to the Mg(2+) binding site. C81 is a Zn(2+) binding site. Mg(2+) contacts are provided by D82 and D84. 2 residues coordinate Zn(2+): C98 and C105.

Belongs to the PRA-CH family. As to quaternary structure, homodimer. Mg(2+) serves as cofactor. Zn(2+) is required as a cofactor.

The protein resides in the cytoplasm. The catalysed reaction is 1-(5-phospho-beta-D-ribosyl)-5'-AMP + H2O = 1-(5-phospho-beta-D-ribosyl)-5-[(5-phospho-beta-D-ribosylamino)methylideneamino]imidazole-4-carboxamide. The protein operates within amino-acid biosynthesis; L-histidine biosynthesis; L-histidine from 5-phospho-alpha-D-ribose 1-diphosphate: step 3/9. Functionally, catalyzes the hydrolysis of the adenine ring of phosphoribosyl-AMP. In Trichormus variabilis (strain ATCC 29413 / PCC 7937) (Anabaena variabilis), this protein is Phosphoribosyl-AMP cyclohydrolase.